A 983-amino-acid polypeptide reads, in one-letter code: Receptor-like protein 19 (983 aa).

The N-terminal stretch at 1 to 25 is a signal peptide; that stretch reads MMKGYITLSFLIILIFNFLDEFAAS. The Extracellular portion of the chain corresponds to 26–937; the sequence is TRHLCDPDQS…EEDEEEVISW (912 aa). Asn-66 and Asn-102 each carry an N-linked (GlcNAc...) asparagine glycan. LRR repeat units lie at residues 82 to 108, 111 to 135, 136 to 159, 161 to 183, 184 to 207, 209 to 231, 232 to 255, 256 to 281, 283 to 302, 303 to 327, 328 to 351, 353 to 375, 376 to 399, 401 to 424, 425 to 448, 450 to 474, 475 to 498, 501 to 524, 525 to 548, 550 to 571, 578 to 602, 603 to 628, 629 to 652, 654 to 674, 675 to 700, 702 to 720, 721 to 744, 793 to 817, 818 to 840, 841 to 865, and 867 to 890; these read FGDV…LFRL, LRFL…LETL, SNLT…IGNL, HLIF…LGYL, SHLT…IGNL, YLTT…LGSL, FHLT…LGNL, SHLT…NLSC, TSFI…SFGN, LNQL…LLNL, RKLS…MSSL, NLKL…LFNI, PSLK…NISS, SNLT…ISKL, VNLK…IFSH, KSIE…ILSS, FKLL…SLSN, LVLI…LRSQ, ELML…LWML, VLNY…TKLG, PPAM…ICEL, PYLS…NIQS, PYLQ…IFES, ISLD…LSHI, SSLG…SLQE, QVLV…KTQF, SKLR…FFVN, LKVF…IGLL, KELH…SMGN, LMAL…LGKL, and YLAY…QFQT. N-linked (GlcNAc...) asparagine glycosylation is found at Asn-137, Asn-158, Asn-171, Asn-190, Asn-195, and Asn-206. N-linked (GlcNAc...) asparagine glycosylation is found at Asn-254 and Asn-278. The N-linked (GlcNAc...) asparagine glycan is linked to Asn-347. N-linked (GlcNAc...) asparagine glycans are attached at residues Asn-389, Asn-396, and Asn-402. Residues Asn-456, Asn-461, Asn-492, and Asn-498 are each glycosylated (N-linked (GlcNAc...) asparagine). N-linked (GlcNAc...) asparagine glycosylation is found at Asn-555, Asn-558, Asn-590, and Asn-616. N-linked (GlcNAc...) asparagine glycosylation is found at Asn-734 and Asn-744. Residue Asn-824 is glycosylated (N-linked (GlcNAc...) asparagine). An N-linked (GlcNAc...) asparagine glycan is attached at Asn-872. Residues 938–958 form a helical membrane-spanning segment; the sequence is IAAVIGFILGTALGLTFGCIL. Residues 959 to 983 lie on the Cytoplasmic side of the membrane; the sequence is FSYKPDWFKNPFVRDKRRNIGTITH.

It belongs to the RLP family.

The protein resides in the cell membrane. In Arabidopsis thaliana (Mouse-ear cress), this protein is Receptor-like protein 19.